The following is a 206-amino-acid chain: Protein Mabiki (206 aa).

A disordered region spans residues Phe-54–Val-77.

In terms of biological role, plays a role in inducing apoptosis and is involved in the repair of head patterning defects in the embryo caused by extra maternal copies of the homeotic gene bicoid. This is Protein Mabiki from Drosophila melanogaster (Fruit fly).